The following is a 395-amino-acid chain: F-box only protein 7 (395 aa).

The 52-residue stretch at 19 to 70 (NHDWSKLCPDILRKIIESLSSLDFYRAKIVCSDWYSVWKTCVKRPLRPWRII) folds into the F-box domain.

The sequence is that of F-box only protein 7 (FBX7) from Arabidopsis thaliana (Mouse-ear cress).